Consider the following 372-residue polypeptide: N-methyl-L-tryptophan oxidase (372 aa).

4-34 is an FAD binding site; the sequence is DLIIIGSGSVGAAAGYYATRAGLNVLMTDAH. C308 carries the S-8alpha-FAD cysteine modification.

The protein belongs to the MSOX/MTOX family. MTOX subfamily. In terms of assembly, monomer. FAD serves as cofactor.

The catalysed reaction is N(alpha)-methyl-L-tryptophan + O2 + H2O = L-tryptophan + formaldehyde + H2O2. Its function is as follows. Catalyzes the oxidative demethylation of N-methyl-L-tryptophan. This chain is N-methyl-L-tryptophan oxidase, found in Escherichia coli O7:K1 (strain IAI39 / ExPEC).